The chain runs to 480 residues: Sialyltransferase-like protein 5 (480 aa).

Residues 1-17 (MARAPPPLSSLPPPPRR) lie on the Cytoplasmic side of the membrane. The chain crosses the membrane as a signal-anchor for type II membrane protein span at residues 18–38 (PTVVLLLGLALAFCLAVLSIQ). At 39-480 (SSFFTAPRLA…VCVRHERSSS (442 aa)) the chain is on the lumenal side. Residues N98, N130, N165, and N321 are each glycosylated (N-linked (GlcNAc...) asparagine).

Belongs to the glycosyltransferase 29 family.

The protein resides in the golgi apparatus membrane. Its function is as follows. May possess sialyltransferase-like activity in vitro. This Oryza sativa subsp. japonica (Rice) protein is Sialyltransferase-like protein 5.